The primary structure comprises 209 residues: Thymidylate kinase (209 aa).

10–17 (GLDGAGKS) serves as a coordination point for ATP.

This sequence belongs to the thymidylate kinase family.

It catalyses the reaction dTMP + ATP = dTDP + ADP. In terms of biological role, phosphorylation of dTMP to form dTDP in both de novo and salvage pathways of dTTP synthesis. The polypeptide is Thymidylate kinase (Francisella tularensis subsp. novicida (strain U112)).